Consider the following 208-residue polypeptide: Crossover junction endodeoxyribonuclease RuvC (208 aa).

Residues aspartate 9, glutamate 70, and aspartate 143 contribute to the active site. The Mg(2+) site is built by aspartate 9, glutamate 70, and aspartate 143.

It belongs to the RuvC family. In terms of assembly, homodimer which binds Holliday junction (HJ) DNA. The HJ becomes 2-fold symmetrical on binding to RuvC with unstacked arms; it has a different conformation from HJ DNA in complex with RuvA. In the full resolvosome a probable DNA-RuvA(4)-RuvB(12)-RuvC(2) complex forms which resolves the HJ. Mg(2+) serves as cofactor.

The protein resides in the cytoplasm. The catalysed reaction is Endonucleolytic cleavage at a junction such as a reciprocal single-stranded crossover between two homologous DNA duplexes (Holliday junction).. Its function is as follows. The RuvA-RuvB-RuvC complex processes Holliday junction (HJ) DNA during genetic recombination and DNA repair. Endonuclease that resolves HJ intermediates. Cleaves cruciform DNA by making single-stranded nicks across the HJ at symmetrical positions within the homologous arms, yielding a 5'-phosphate and a 3'-hydroxyl group; requires a central core of homology in the junction. The consensus cleavage sequence is 5'-(A/T)TT(C/G)-3'. Cleavage occurs on the 3'-side of the TT dinucleotide at the point of strand exchange. HJ branch migration catalyzed by RuvA-RuvB allows RuvC to scan DNA until it finds its consensus sequence, where it cleaves and resolves the cruciform DNA. The chain is Crossover junction endodeoxyribonuclease RuvC from Leifsonia xyli subsp. xyli (strain CTCB07).